The chain runs to 126 residues: Heavy metal-associated isoprenylated plant protein 14 (126 aa).

The 67-residue stretch at 3 to 69 folds into the HMA domain; the sequence is AKNAVLQLSI…LCNTEIVSVD (67 aa). Cys123 bears the Cysteine methyl ester mark. The S-farnesyl cysteine moiety is linked to residue Cys123. Positions 124–126 are cleaved as a propeptide — removed in mature form; it reads VIM.

The protein belongs to the HIPP family.

Functionally, probable heavy-metal-binding protein. The polypeptide is Heavy metal-associated isoprenylated plant protein 14 (Arabidopsis thaliana (Mouse-ear cress)).